A 390-amino-acid chain; its full sequence is 3-ketosteroid-9-alpha-monooxygenase, oxygenase component (390 aa).

Residues 32-134 enclose the Rieske domain; sequence WHCLGLLRDF…TLERNGQLYV (103 aa). Positions 73, 75, 92, and 95 each coordinate [2Fe-2S] cluster. The Fe cation site is built by Asn-181, His-187, His-192, and Asp-311.

As to quaternary structure, homotrimer. The two-component system 3-ketosteroid-9-alpha-monooxygenase is composed of an oxygenase component KshA and a reductase component KshB. [2Fe-2S] cluster serves as cofactor. It depends on Fe cation as a cofactor.

It catalyses the reaction androsta-1,4-diene-3,17-dione + 2 reduced [2Fe-2S]-[ferredoxin] + O2 + 2 H(+) = 9alpha-hydroxyandrosta-1,4-diene-3,17-dione + 2 oxidized [2Fe-2S]-[ferredoxin] + H2O. Its pathway is steroid metabolism; cholesterol degradation. Its function is as follows. Probably involved in the degradation of cholesterol. In vitro, catalyzes the introduction of a 9alpha-hydroxyl moiety into the ring B of 3-ketosteroid substrates such as 1,4-androstadiene-3,17-dione (ADD), 4-androstene-3,17-dione (AD), 4-androstene-17beta-ol-3-one (testosterone), 4-pregnene-3,20-dione (progesterone), 19-nor-4-androstene-3,17-dione, 1-(5alpha)-androstene-3,17-dione, 5alpha-androstane-3,17-dione, 5beta-androstane-3,17-dione, 5alpha-androstane-17beta-ol-3-one (stanolon), 11beta-hydrocortisone, 3-oxo-23,24-bisnorcholesta-4-en-22-oate (4-BNC), 23,24-bisnorcholesta-4-ene-22-oate, 3-oxo-23,24-bisnorcholesta-1,4-dien-22-oate (1,4-BNC) and 3-oxo-23,24-bisnorcholesta-1,4-dien-22-oyl-coenzyme A thioester (1,4-BNC-CoA). KshA5 has the broadest substrate range without a clear substrate preference and is active with Delta-4, Delta-1,4, 5alpha-H and 5beta-H steroids, as well as with steroids having bulky aliphatic side chains and an isopropionyl side chain at C17. The chain is 3-ketosteroid-9-alpha-monooxygenase, oxygenase component from Rhodococcus rhodochrous.